Reading from the N-terminus, the 505-residue chain is AMP phosphorylase (505 aa).

Residues G170, 196–201, and T205 contribute to the AMP site; that span reads SRAITS. The active-site Proton donor is the D258. Positions 266 and 290 each coordinate AMP.

It belongs to the thymidine/pyrimidine-nucleoside phosphorylase family. Type 2 subfamily.

It carries out the reaction AMP + phosphate = alpha-D-ribose 1,5-bisphosphate + adenine. The enzyme catalyses CMP + phosphate = cytosine + alpha-D-ribose 1,5-bisphosphate. The catalysed reaction is UMP + phosphate = alpha-D-ribose 1,5-bisphosphate + uracil. In terms of biological role, catalyzes the conversion of AMP and phosphate to adenine and ribose 1,5-bisphosphate (R15P). Exhibits phosphorylase activity toward CMP and UMP in addition to AMP. Functions in an archaeal AMP degradation pathway, together with R15P isomerase and RubisCO. The protein is AMP phosphorylase of Methanococcus maripaludis (strain C6 / ATCC BAA-1332).